The following is a 33-amino-acid chain: Mu-theraphotoxin-Os1a (33 aa).

Cystine bridges form between cysteine 2–cysteine 17, cysteine 9–cysteine 22, and cysteine 16–cysteine 29. At leucine 33 the chain carries Leucine amide.

Belongs to the neurotoxin 10 (Hwtx-1) family. 14 (Hntx-1) subfamily. Monomer. As to expression, expressed by the venom gland.

It localises to the secreted. Functionally, potently and reversibly inhibits some human voltage-gated sodium channels (Nav1.1/SCN1A (IC(50)=72.0 nM), Nav1.2/SCN2A (IC(50)=75.5 nM), Nav1.6/SCN8A (IC(50)=115.0 nM), Nav1.7/SCN9A (IC(50)=52.7-129.5 nM), Nav1.3/SCN3A (IC(50)=306.6 nM)). The hNav1.7/SCN9A channel inhibition occurs without any change in steady-state inactivation- and conductance-voltage relationships. On adult mouse DRG neurons, this toxin is approximately 1000-fold more efficient to inhibit tetrodotoxin (TTX)-sensitive than TTX-resistant sodium currents. In vivo, this toxin exhibits analgesic effects in mice pain models. This chain is Mu-theraphotoxin-Os1a, found in Omothymus schioedtei (Malaysian earth tiger tarantula).